Consider the following 208-residue polypeptide: FMN-dependent NADH:quinone oxidoreductase (208 aa).

FMN-binding positions include 17–19, 99–102, and 143–146; these read SNS, MWNL, and SRGG.

The protein belongs to the azoreductase type 1 family. In terms of assembly, homodimer. Requires FMN as cofactor.

The enzyme catalyses 2 a quinone + NADH + H(+) = 2 a 1,4-benzosemiquinone + NAD(+). The catalysed reaction is N,N-dimethyl-1,4-phenylenediamine + anthranilate + 2 NAD(+) = 2-(4-dimethylaminophenyl)diazenylbenzoate + 2 NADH + 2 H(+). In terms of biological role, quinone reductase that provides resistance to thiol-specific stress caused by electrophilic quinones. Its function is as follows. Also exhibits azoreductase activity. Catalyzes the reductive cleavage of the azo bond in aromatic azo compounds to the corresponding amines. This chain is FMN-dependent NADH:quinone oxidoreductase, found in Staphylococcus carnosus (strain TM300).